The sequence spans 157 residues: uncharacterized protein (157 aa).

Residues 1-23 form the signal peptide; that stretch reads MEALRRAHEATLRLLLCRPWASG.

It localises to the secreted. This is an uncharacterized protein from Mus musculus (Mouse).